A 487-amino-acid chain; its full sequence is Iron-sulfur cluster assembly SufBD family protein ycf24 (487 aa).

Belongs to the iron-sulfur cluster assembly SufBD family.

It localises to the plastid. The protein resides in the chloroplast. The sequence is that of Iron-sulfur cluster assembly SufBD family protein ycf24 (ycf24) from Porphyra purpurea (Red seaweed).